Here is a 711-residue protein sequence, read N- to C-terminus: Polyribonucleotide nucleotidyltransferase (711 aa).

Mg(2+)-binding residues include aspartate 491 and aspartate 497. Residues 559-618 (PRLITIKINPEKIRDVIGKGGAVIRALTEETGTQIDISDEGVVTIASVDAAAGQEAKRRI) form the KH domain. An S1 motif domain is found at 628–696 (GKIYEGTVLK…DRGRLKLSMK (69 aa)).

The protein belongs to the polyribonucleotide nucleotidyltransferase family. The cofactor is Mg(2+).

It is found in the cytoplasm. The catalysed reaction is RNA(n+1) + phosphate = RNA(n) + a ribonucleoside 5'-diphosphate. Involved in mRNA degradation. Catalyzes the phosphorolysis of single-stranded polyribonucleotides processively in the 3'- to 5'-direction. In Janthinobacterium sp. (strain Marseille) (Minibacterium massiliensis), this protein is Polyribonucleotide nucleotidyltransferase.